The chain runs to 274 residues: NADPH-dependent 7-cyano-7-deazaguanine reductase (274 aa).

80–82 (VES) is a substrate binding site. NADPH is bound at residue 82–83 (SK). The Thioimide intermediate role is filled by Cys181. Asp188 acts as the Proton donor in catalysis. 220–221 (HE) serves as a coordination point for substrate. 249-250 (RG) serves as a coordination point for NADPH.

Belongs to the GTP cyclohydrolase I family. QueF type 2 subfamily. Homodimer.

Its subcellular location is the cytoplasm. The catalysed reaction is 7-aminomethyl-7-carbaguanine + 2 NADP(+) = 7-cyano-7-deazaguanine + 2 NADPH + 3 H(+). It functions in the pathway tRNA modification; tRNA-queuosine biosynthesis. Catalyzes the NADPH-dependent reduction of 7-cyano-7-deazaguanine (preQ0) to 7-aminomethyl-7-deazaguanine (preQ1). This is NADPH-dependent 7-cyano-7-deazaguanine reductase from Paraburkholderia xenovorans (strain LB400).